Consider the following 795-residue polypeptide: Putative replication origin-binding protein (795 aa).

The Helicase ATP-binding domain occupies 121–289 (WLSNDKIKTL…DNFGKSIVVN (169 aa)). 134–141 (SPMGTGKT) is a binding site for ATP.

The protein belongs to the mimivirus R1 family.

Probably involved in DNA replication. May bind the genome origin of replication (ori). This Acanthamoeba polyphaga (Amoeba) protein is Putative replication origin-binding protein.